Consider the following 396-residue polypeptide: MSSSPSPSPSSSSSSSASSSASSSPSSSSKLTWLDIRSVGEARAAIVQEALHHRVEALVADDPAHLADLPPTVAKVLLVVGKQIPEEFGEATVVVVDPSKHGVTPAELALKHPEIEFGRFVEIIDAPTLEDACESSRTEKWSVLLFRDPTKIPLEIVIAAAARASGSMVTIAQDLEEAEILFGVLEHGSDGVMMAPKTVGDAAELKRIAEAGIPNLNLTELRVVETSHIGMGERACVDTTTHFGEDEGILVGSHSKGMILCVSETHPLPYMPTRPFRVNAGAIHSYTLGRDERTNYLSELKTGSKLTAVDIKGNTRLVTVGRVKIETRPLISIDAEAPDGRRVNLILQDDWHVRVLGPGGTVLNSTELKPGDTVLGYLPVEDRHVGYPINEFCLEK.

The disordered stretch occupies residues 1-29 (MSSSPSPSPSSSSSSSASSSASSSPSSSS).

The protein belongs to the archaeal-type DHQ synthase family. GriH subfamily. As to quaternary structure, monomer. The cofactor is Mn(2+).

The catalysed reaction is 2-amino-4,5-dihydroxy-6-oxo-7-(phosphooxy)heptanoate = 3-amino-4-hydroxybenzoate + phosphate + 2 H2O + H(+). Catalyzes the cyclization of 2-amino-4,5-dihydroxy-6-one-heptanoic acid-7-phosphate to yield 3-amino-4-hydroxybenzoic acid (3,4-AHBA). The polypeptide is 3-amino-4-hydroxybenzoic acid synthase (griH) (Streptomyces griseus subsp. griseus (strain JCM 4626 / CBS 651.72 / NBRC 13350 / KCC S-0626 / ISP 5235)).